Reading from the N-terminus, the 306-residue chain is Probable L,D-transpeptidase YbiS (306 aa).

The first 24 residues, 1 to 24, serve as a signal peptide directing secretion; it reads MNMKLKTLFAAAFAVVGFCSTASA. The L,D-TPase catalytic domain occupies 99–234; sequence EGIVINSAEM…VPVGTRVQFI (136 aa). The active-site Proton donor/acceptor is the histidine 194. The active-site Nucleophile is cysteine 210.

Belongs to the YkuD family.

The protein localises to the periplasm. It functions in the pathway cell wall biogenesis; peptidoglycan biosynthesis. Functionally, responsible, at least in part, for anchoring of the major outer membrane lipoprotein (Lpp) to the peptidoglycan via a meso-diaminopimelyl-L-Lys- bond on the terminal residue of Lpp. This chain is Probable L,D-transpeptidase YbiS (ybiS), found in Escherichia coli O6:H1 (strain CFT073 / ATCC 700928 / UPEC).